Consider the following 373-residue polypeptide: MAVGGNNWSMWLRMSRVHLRQITKSLDRTLISLSHGNFSHQYNRNIFVTWWKSLFEASTAFRRASGLTVSPLTRRGIARFDHFRPVPNVSKFASFPRVPKGAPRGLFTNWNMTTSKRLLGQRAYSTSSIKFTQEAVNNMTISLRCFFNSLGGLNQCSHSNSCKAYQNASNVTSKQDHVQPVALKKLSQKDINFIRNLELFKIMKTQNEVVDETSAYYMEKPGSYIEFTISEFNVNGTFSAPLSFLDPSLLADLDEMIRNYKYELKSIYSSVDMILQNYGSLPITFHRNKIRIHFPNSTVVETEKLIAGLNIATGVIYADTSPDISLEGTNLNALVNVDNSGSVWSFVKEPSFPSRSAFSPILSDASYDTYELV.

Required for survival at high temperature during stationary phase. The protein is Stationary phase protein 5 (SPG5) of Saccharomyces cerevisiae (strain ATCC 204508 / S288c) (Baker's yeast).